A 506-amino-acid chain; its full sequence is NAD(P)H-quinone oxidoreductase subunit 2, chloroplastic (506 aa).

The next 13 helical transmembrane spans lie at 15–35 (LIPE…DLVY), 39–59 (CHAW…VLLG), 84–104 (LSLV…LLSI), 113–133 (APSE…LVAG), 137–157 (LLMM…LTGY), 172–192 (LLVG…MYGI), 217–237 (CALA…AAPF), 249–269 (PTPV…ILAV), 283–303 (WHLI…FIAV), 339–359 (IVYL…VILF), 382–402 (ALCL…AGFF), 418–438 (SLVW…LSVV), and 471–491 (VGIF…NSMV).

It belongs to the complex I subunit 2 family. NDH is composed of at least 16 different subunits, 5 of which are encoded in the nucleus.

The protein localises to the plastid. The protein resides in the chloroplast thylakoid membrane. The catalysed reaction is a plastoquinone + NADH + (n+1) H(+)(in) = a plastoquinol + NAD(+) + n H(+)(out). The enzyme catalyses a plastoquinone + NADPH + (n+1) H(+)(in) = a plastoquinol + NADP(+) + n H(+)(out). In terms of biological role, NDH shuttles electrons from NAD(P)H:plastoquinone, via FMN and iron-sulfur (Fe-S) centers, to quinones in the photosynthetic chain and possibly in a chloroplast respiratory chain. The immediate electron acceptor for the enzyme in this species is believed to be plastoquinone. Couples the redox reaction to proton translocation, and thus conserves the redox energy in a proton gradient. This Nephroselmis olivacea (Green alga) protein is NAD(P)H-quinone oxidoreductase subunit 2, chloroplastic.